We begin with the raw amino-acid sequence, 245 residues long: Large ribosomal subunit protein uL3 (245 aa).

An N5-methylglutamine modification is found at glutamine 151. Residues 214–245 (KDAPQPGKYRLANSAAPQPAEADAASDTGAQA) form a disordered region. The span at 225–245 (ANSAAPQPAEADAASDTGAQA) shows a compositional bias: low complexity.

The protein belongs to the universal ribosomal protein uL3 family. As to quaternary structure, part of the 50S ribosomal subunit. Forms a cluster with proteins L14 and L19. In terms of processing, methylated by PrmB.

In terms of biological role, one of the primary rRNA binding proteins, it binds directly near the 3'-end of the 23S rRNA, where it nucleates assembly of the 50S subunit. The protein is Large ribosomal subunit protein uL3 of Methylocella silvestris (strain DSM 15510 / CIP 108128 / LMG 27833 / NCIMB 13906 / BL2).